Consider the following 195-residue polypeptide: Imidazoleglycerol-phosphate dehydratase (195 aa).

This sequence belongs to the imidazoleglycerol-phosphate dehydratase family.

The protein localises to the cytoplasm. It carries out the reaction D-erythro-1-(imidazol-4-yl)glycerol 3-phosphate = 3-(imidazol-4-yl)-2-oxopropyl phosphate + H2O. Its pathway is amino-acid biosynthesis; L-histidine biosynthesis; L-histidine from 5-phospho-alpha-D-ribose 1-diphosphate: step 6/9. The sequence is that of Imidazoleglycerol-phosphate dehydratase from Paraburkholderia phymatum (strain DSM 17167 / CIP 108236 / LMG 21445 / STM815) (Burkholderia phymatum).